The following is a 517-amino-acid chain: Ribonuclease Y (517 aa).

The helical transmembrane segment at 1–21 (MIESLIALIAAIVGLGIGYLV) threads the bilayer. The 67-residue stretch at 207–273 (LINVINIKND…TKVIELLVED (67 aa)) folds into the KH domain. The HD domain occupies 333-426 (ALAHSLEVAH…VCAADTLSAA (94 aa)).

This sequence belongs to the RNase Y family.

It localises to the cell membrane. Functionally, endoribonuclease that initiates mRNA decay. In Campylobacter jejuni subsp. jejuni serotype O:6 (strain 81116 / NCTC 11828), this protein is Ribonuclease Y.